The primary structure comprises 1597 residues: Collagen alpha-1(XVII) chain (1597 aa).

Disordered regions lie at residues methionine 1–arginine 155 and glycine 168–lysine 188. The Cytoplasmic portion of the chain corresponds to methionine 1–tryptophan 468. Residues methionine 1–glycine 567 are nonhelical region (NC16A). Residues arginine 9–isoleucine 19 are compositionally biased toward basic and acidic residues. Composition is skewed to polar residues over residues threonine 58–serine 96, glutamate 111–proline 120, and arginine 170–leucine 184. The segment at arginine 146 to serine 231 is necessary for interaction with DST and for the recruitment of DST to hemidesmosome. The helical; Signal-anchor for type II membrane protein transmembrane segment at leucine 469–leucine 489 threads the bilayer. Topologically, residues alanine 490–tyrosine 1597 are extracellular. Disordered regions lie at residues asparagine 562–serine 857, leucine 907–arginine 927, leucine 970–serine 1041, threonine 1289–alanine 1316, and phenylalanine 1344–glycine 1394. Residues serine 568–alanine 1572 form a triple-helical region region. The span at proline 604–arginine 632 shows a compositional bias: low complexity. Positions glycine 665–glycine 674 are enriched in gly residues. 2 stretches are compositionally biased toward low complexity: residues proline 730 to aspartate 748 and aspartate 774 to proline 796. Positions proline 820 to proline 838 are enriched in pro residues. Over residues alanine 847–serine 857 the composition is skewed to low complexity. 5 stretches are compositionally biased toward pro residues: residues proline 910–leucine 922, proline 977–proline 986, proline 1023–proline 1035, proline 1296–proline 1310, and proline 1348–proline 1357. Over residues serine 1377–methionine 1393 the composition is skewed to low complexity. A glycan (N-linked (GlcNAc...) asparagine) is linked at asparagine 1493. A disordered region spans residues glycine 1531 to leucine 1566. Residues glycine 1537–alanine 1557 show a composition bias toward basic and acidic residues. Residues serine 1573–tyrosine 1597 are nonhelical region (NC1).

In terms of assembly, homotrimers of alpha 1(XVII)chains. Interacts (via cytoplasmic region) with ITGB4 (via cytoplasmic region). Interacts (via cytoplasmic region) with DST (via N-terminus). Interacts (via N-terminus) with PLEC. Interacts (via cytoplasmic region) with DSP. The intracellular/endo domain is disulfide-linked. Post-translationally, prolines at the third position of the tripeptide repeating unit (G-X-Y) are hydroxylated in some or all of the chains. In terms of processing, the ectodomain is shedded from the surface of keratinocytes resulting in a 120-kDa soluble form, also named as 120 kDa linear IgA disease antigen homolog. The shedding is mediated by membrane-bound metalloproteases. Upper lamina lucidalhemidesmosome.

Its subcellular location is the cell junction. It localises to the hemidesmosome. It is found in the membrane. The protein localises to the secreted. The protein resides in the extracellular space. Its subcellular location is the extracellular matrix. It localises to the basement membrane. Its function is as follows. The 120 kDa linear IgA disease antigen homolog is an anchoring filament component involved in dermal-epidermal cohesion. The polypeptide is Collagen alpha-1(XVII) chain (COL17A1) (Canis lupus familiaris (Dog)).